A 176-amino-acid chain; its full sequence is Ribosome maturation factor RimP (176 aa).

A disordered region spans residues 143 to 176; sequence LKPQTAKKKGRQEETEDMTLELDAVSRAVPEAEI.

The protein belongs to the RimP family.

The protein localises to the cytoplasm. Required for maturation of 30S ribosomal subunits. The polypeptide is Ribosome maturation factor RimP (Chlorobium luteolum (strain DSM 273 / BCRC 81028 / 2530) (Pelodictyon luteolum)).